Reading from the N-terminus, the 673-residue chain is Zinc finger and BTB domain-containing protein 16 (673 aa).

Residues cysteine 34 to alanine 96 form the BTB domain. Serine 76, serine 184, and serine 197 each carry phosphoserine; by PDPK1. The tract at residues lysine 200–glutamate 300 is interaction with RUNX1T1. Disordered regions lie at residues glutamine 215–proline 236 and aspartate 249–glycine 332. A Phosphoserine; by PDPK1 modification is found at serine 256. Threonine 282 bears the Phosphothreonine; by PDPK1 mark. Basic and acidic residues-rich tracts occupy residues arginine 293–serine 302 and arginine 319–leucine 331. 8 consecutive C2H2-type zinc fingers follow at residues glutamate 404–histidine 426, tyrosine 432–histidine 454, phenylalanine 461–histidine 483, valine 490–histidine 512, tyrosine 518–histidine 540, tyrosine 546–histidine 568, tyrosine 574–histidine 596, and phenylalanine 602–histidine 624. Serine 628 carries the post-translational modification Phosphoserine; by PDPK1. A C2H2-type 9 zinc finger spans residues tyrosine 630–histidine 652.

Belongs to the krueppel C2H2-type zinc-finger protein family. As to quaternary structure, binds EPN1. Interacts with ZBTB32 and CUL3. Interacts with ATP7B. Interacts with transcriptional corepressor RUNX1T1 (via its N-terminus); the interaction increases the transcription repression activity of ZBTB16. Interacts (via C2H2-type zinc finger domains 1 and 2) with RNF112. In terms of tissue distribution, within the hematopoietic system, PLZF is expressed in bone marrow, early myeloid cell lines and peripheral blood mononuclear cells. Also expressed in the ovary, and at lower levels, in the kidney and lung.

It localises to the nucleus. The protein resides in the nuclear body. It participates in protein modification; protein ubiquitination. Functionally, acts as a transcriptional repressor. Transcriptional repression may be mediated through recruitment of histone deacetylases to target promoters. May play a role in myeloid maturation and in the development and/or maintenance of other differentiated tissues. Probable substrate-recognition component of an E3 ubiquitin-protein ligase complex which mediates the ubiquitination and subsequent proteasomal degradation of target proteins. The chain is Zinc finger and BTB domain-containing protein 16 (ZBTB16) from Homo sapiens (Human).